A 752-amino-acid chain; its full sequence is MTISSQEQETKKVQVTVDKNPVATSFEKWAKPGHFSRTLAKGPKTTTWIWNLHADAHDFDSHTSSLEEVSRKIFSAHFGQLAIIFLWLSGMYFHGAKFSNYIAWLSNPTAIKPSAQIVWPIVGQEILNGDVGGGFQGVQITSGFFQIWRASGITTEFELYATAIGGLFMACLMLFAGWFHYHKAAPKLEWFQNVESMMNHHLAGLLGLGCLGWAGHQIHISIPINKLLDSGVSPQELPLPHEFLVNRELVSQLYPSFSKGIIPFFTLNWNEYSDFLTFKGGLNPITGGLWLTDTAHHHLALAVLFLVAGHMYRTNWGIGHSMKEILEAHKGPFTGEGHKGIYEILTTSWHAQLAINLAMMGSLSIIVAHHMYAMPPYPYIATDYPTQLSLFTHHMWIGGFCIVGAGAHASIFMVRDYNPAQNYNNVLDRVIRHRDAIISHLNWVCIFLGFHSFGLYIHNDTMRALGRSQDMFSDTAIQLQPIFAQWIQNIHSLAPSNTSPNALATASYAFGGDVIAVNNKIAMMPINLGTADFMVHHIHAFTIHVTVLILVKGFLFSRNSRLIPDKSSLGFRFPCDGPGRGGTCQVSGWDHVFLGLFWMYNSLSIAIFHFSWKMQSDVWGSVTPAGTVSHITGGNFAQSAITINGWLRDFLWAQASQVIQSYGSALSAYGLIFLGAHFVWAFSLMFLFSGRGYWQELIESIVWAHNKVKVAPSIQPRALSITQGRAVGVAHYLLGGIGTTWAFFLARIISVG.

8 helical membrane-spanning segments follow: residues isoleucine 73–alanine 96, leucine 159–histidine 182, methionine 198–isoleucine 222, threonine 294–tyrosine 312, tryptophan 349–tyrosine 372, leucine 388–valine 414, alanine 436–histidine 458, and phenylalanine 533–valine 551. [4Fe-4S] cluster-binding residues include cysteine 575 and cysteine 584. Helical transmembrane passes span histidine 591 to tryptophan 612 and leucine 666 to phenylalanine 688. Histidine 677 is a binding site for chlorophyll a'. Residues methionine 685 and tyrosine 693 each contribute to the chlorophyll a site. Tryptophan 694 is a phylloquinone binding site. Residues alanine 726 to alanine 746 form a helical membrane-spanning segment.

This sequence belongs to the PsaA/PsaB family. As to quaternary structure, the PsaA/B heterodimer binds the P700 chlorophyll special pair and subsequent electron acceptors. PSI consists of a core antenna complex that captures photons, and an electron transfer chain that converts photonic excitation into a charge separation. The eukaryotic PSI reaction center is composed of at least 11 subunits. The cofactor is P700 is a chlorophyll a/chlorophyll a' dimer, A0 is one or more chlorophyll a, A1 is one or both phylloquinones and FX is a shared 4Fe-4S iron-sulfur center..

The protein resides in the plastid. It is found in the chloroplast thylakoid membrane. It catalyses the reaction reduced [plastocyanin] + hnu + oxidized [2Fe-2S]-[ferredoxin] = oxidized [plastocyanin] + reduced [2Fe-2S]-[ferredoxin]. Functionally, psaA and PsaB bind P700, the primary electron donor of photosystem I (PSI), as well as the electron acceptors A0, A1 and FX. PSI is a plastocyanin/cytochrome c6-ferredoxin oxidoreductase, converting photonic excitation into a charge separation, which transfers an electron from the donor P700 chlorophyll pair to the spectroscopically characterized acceptors A0, A1, FX, FA and FB in turn. Oxidized P700 is reduced on the lumenal side of the thylakoid membrane by plastocyanin or cytochrome c6. This is Photosystem I P700 chlorophyll a apoprotein A1 from Gracilaria tenuistipitata var. liui (Red alga).